A 279-amino-acid polypeptide reads, in one-letter code: NH(3)-dependent NAD(+) synthetase (279 aa).

46 to 53 (GISGGQDS) contacts ATP. Asp52 contributes to the Mg(2+) binding site. Residue Arg145 coordinates deamido-NAD(+). Thr165 contacts ATP. Glu170 is a Mg(2+) binding site. Residues Lys178 and Asp185 each coordinate deamido-NAD(+). 2 residues coordinate ATP: Lys194 and Thr216. 265–266 (HK) provides a ligand contact to deamido-NAD(+).

It belongs to the NAD synthetase family. As to quaternary structure, homodimer.

The enzyme catalyses deamido-NAD(+) + NH4(+) + ATP = AMP + diphosphate + NAD(+) + H(+). Its pathway is cofactor biosynthesis; NAD(+) biosynthesis; NAD(+) from deamido-NAD(+) (ammonia route): step 1/1. In terms of biological role, catalyzes the ATP-dependent amidation of deamido-NAD to form NAD. Uses ammonia as a nitrogen source. In Rhodococcus jostii (strain RHA1), this protein is NH(3)-dependent NAD(+) synthetase.